The following is a 178-amino-acid chain: Large ribosomal subunit protein uL6 (178 aa).

The protein belongs to the universal ribosomal protein uL6 family. Part of the 50S ribosomal subunit.

In terms of biological role, this protein binds to the 23S rRNA, and is important in its secondary structure. It is located near the subunit interface in the base of the L7/L12 stalk, and near the tRNA binding site of the peptidyltransferase center. The chain is Large ribosomal subunit protein uL6 from Streptococcus agalactiae serotype V (strain ATCC BAA-611 / 2603 V/R).